A 109-amino-acid chain; its full sequence is Large ribosomal subunit protein uL24 (109 aa).

This sequence belongs to the universal ribosomal protein uL24 family. Part of the 50S ribosomal subunit.

Its function is as follows. One of two assembly initiator proteins, it binds directly to the 5'-end of the 23S rRNA, where it nucleates assembly of the 50S subunit. Functionally, one of the proteins that surrounds the polypeptide exit tunnel on the outside of the subunit. This is Large ribosomal subunit protein uL24 from Rickettsia canadensis (strain McKiel).